Here is a 216-residue protein sequence, read N- to C-terminus: Small ribosomal subunit protein uS5 (216 aa).

Residues 1-55 (MDRKLENQKDLLNQDPKVELNSQSVAKNPLNSREVKPIQRRRPLRKNSRDKNSKP) are disordered. Over residues 20–31 (LNSQSVAKNPLN) the composition is skewed to polar residues. In terms of domain architecture, S5 DRBM spans 57–120 (FEERVIAIHR…KDAQNRLVSV (64 aa)).

It belongs to the universal ribosomal protein uS5 family. Part of the 30S ribosomal subunit. Contacts proteins S4 and S8.

With S4 and S12 plays an important role in translational accuracy. In terms of biological role, located at the back of the 30S subunit body where it stabilizes the conformation of the head with respect to the body. The polypeptide is Small ribosomal subunit protein uS5 (Mesomycoplasma hyopneumoniae (strain J / ATCC 25934 / NCTC 10110) (Mycoplasma hyopneumoniae)).